The following is a 113-amino-acid chain: Hydrogenase maturation factor HypA (113 aa).

His-2 contacts Ni(2+). 4 residues coordinate Zn(2+): Cys-73, Cys-76, Cys-89, and Cys-92.

Belongs to the HypA/HybF family.

Functionally, involved in the maturation of [NiFe] hydrogenases. Required for nickel insertion into the metal center of the hydrogenase. The sequence is that of Hydrogenase maturation factor HypA from Aeromonas hydrophila subsp. hydrophila (strain ATCC 7966 / DSM 30187 / BCRC 13018 / CCUG 14551 / JCM 1027 / KCTC 2358 / NCIMB 9240 / NCTC 8049).